A 177-amino-acid polypeptide reads, in one-letter code: Ribosome maturation factor RimM (177 aa).

The PRC barrel domain maps to 98–177; it reads DDGYYWKDLM…TIEVDWDPGF (80 aa).

This sequence belongs to the RimM family. In terms of assembly, binds ribosomal protein uS19.

It localises to the cytoplasm. An accessory protein needed during the final step in the assembly of 30S ribosomal subunit, possibly for assembly of the head region. Essential for efficient processing of 16S rRNA. May be needed both before and after RbfA during the maturation of 16S rRNA. It has affinity for free ribosomal 30S subunits but not for 70S ribosomes. The protein is Ribosome maturation factor RimM of Enterobacter sp. (strain 638).